Here is a 269-residue protein sequence, read N- to C-terminus: Octanoyltransferase LipM (269 aa).

In terms of domain architecture, BPL/LPL catalytic spans 31 to 239 (NHGAPVLRFY…GFSEGFEVNF (209 aa)). The active-site Acyl-thioester intermediate is the Cys-141.

Belongs to the octanoyltransferase LipM family. As to quaternary structure, monomer.

It carries out the reaction octanoyl-[ACP] + L-lysyl-[protein] = N(6)-octanoyl-L-lysyl-[protein] + holo-[ACP] + H(+). Its pathway is protein modification; protein lipoylation via endogenous pathway; protein N(6)-(lipoyl)lysine from octanoyl-[acyl-carrier-protein]. Catalyzes the transfer of endogenously produced octanoic acid from octanoyl-acyl-carrier-protein onto the lipoyl domain of GcvH, an intermediate carrier during protein lipoylation. This Carboxydothermus hydrogenoformans (strain ATCC BAA-161 / DSM 6008 / Z-2901) protein is Octanoyltransferase LipM.